A 152-amino-acid polypeptide reads, in one-letter code: AIG2-like protein D (152 aa).

Residue 13-18 (YGSLMA) coordinates substrate. Glutamate 81 functions as the Proton acceptor in the catalytic mechanism.

This sequence belongs to the gamma-glutamylcyclotransferase family. In terms of tissue distribution, expressed mainly in leaves.

Putative gamma-glutamylcyclotransferase. The sequence is that of AIG2-like protein D from Arabidopsis thaliana (Mouse-ear cress).